The chain runs to 233 residues: Hydroxyacylglutathione hydrolase (233 aa).

Zn(2+) is bound by residues His52, His54, Asp56, His57, His108, Asp125, and His163.

This sequence belongs to the metallo-beta-lactamase superfamily. Glyoxalase II family. As to quaternary structure, monomer. Zn(2+) is required as a cofactor.

The catalysed reaction is an S-(2-hydroxyacyl)glutathione + H2O = a 2-hydroxy carboxylate + glutathione + H(+). The protein operates within secondary metabolite metabolism; methylglyoxal degradation; (R)-lactate from methylglyoxal: step 2/2. In terms of biological role, thiolesterase that catalyzes the hydrolysis of S-D-lactoyl-glutathione to form glutathione and D-lactic acid. In Actinobacillus succinogenes (strain ATCC 55618 / DSM 22257 / CCUG 43843 / 130Z), this protein is Hydroxyacylglutathione hydrolase.